The sequence spans 390 residues: Putative glutamate--cysteine ligase 2 (390 aa).

It belongs to the glutamate--cysteine ligase type 2 family. YbdK subfamily.

It carries out the reaction L-cysteine + L-glutamate + ATP = gamma-L-glutamyl-L-cysteine + ADP + phosphate + H(+). ATP-dependent carboxylate-amine ligase which exhibits weak glutamate--cysteine ligase activity. This chain is Putative glutamate--cysteine ligase 2, found in Chloroflexus aurantiacus (strain ATCC 29366 / DSM 635 / J-10-fl).